A 246-amino-acid chain; its full sequence is tRNA pseudouridine synthase A (246 aa).

The Nucleophile role is filled by D52. Residue Y111 participates in substrate binding.

This sequence belongs to the tRNA pseudouridine synthase TruA family. In terms of assembly, homodimer.

It catalyses the reaction uridine(38/39/40) in tRNA = pseudouridine(38/39/40) in tRNA. In terms of biological role, formation of pseudouridine at positions 38, 39 and 40 in the anticodon stem and loop of transfer RNAs. The sequence is that of tRNA pseudouridine synthase A from Ehrlichia ruminantium (strain Gardel).